Consider the following 1183-residue polypeptide: Polyphosphatidylinositol phosphatase INP52 (1183 aa).

Positions 133 to 153 (PPSISTHSSRSSLRSSSSRSL) are enriched in low complexity. The segment at 133 to 161 (PPSISTHSSRSSLRSSSSRSLNAQEQAPK) is disordered. Residue Ser-152 is modified to Phosphoserine. Residues 167–507 (LRKLLSNGSF…GDQISQIYTG (341 aa)) enclose the SAC domain. At Ser-522 the chain carries Phosphoserine. Residues 955–968 (SPLLSGPSPQPSVV) are compositionally biased toward low complexity. The interval 955-1183 (SPLLSGPSPQ…VHPLKPCDPN (229 aa)) is disordered. A phosphoserine mark is found at Ser-1005 and Ser-1016. Residue Thr-1032 is modified to Phosphothreonine. Composition is skewed to polar residues over residues 1046-1057 (KPVSLQKSSSEL), 1082-1100 (STAP…VSTT), and 1130-1145 (KLNT…SPSN). Residue Ser-1095 is modified to Phosphoserine.

The protein belongs to the synaptojanin family. In the central section; belongs to the inositol 1,4,5-trisphosphate 5-phosphatase family. In terms of assembly, interacts (via SAC domain) with BSP1; the interaction is direct. Interacts with ABP1.

The protein localises to the cytoplasm. It localises to the cytoskeleton. The protein resides in the actin patch. The enzyme catalyses a 1,2-diacyl-sn-glycero-3-phospho-(1D-myo-inositol-4,5-bisphosphate) + H2O = a 1,2-diacyl-sn-glycero-3-phospho-(1D-myo-inositol 4-phosphate) + phosphate. Its function is as follows. Dephosphorylates a number of phosphatidylinositols (PIs) like phosphatidylinositol 4,5-bisphosphate (PtdIns(4,5)P2), but also phosphatidylinositol 3-phosphate (PtdIns(3)P), phosphatidylinositol 4-phosphate (PtdIns(4)P), and phosphatidylinositol 3,5-bisphosphate (PtdIns(3,5)P2). Controls the cellular levels and subcellular distribution of phosphatidylinositol 3-phosphate and phosphatidylinositol 4,5-bisphosphate. Specifically functions within the early endocytic pathway and actin organization. This Saccharomyces cerevisiae (strain ATCC 204508 / S288c) (Baker's yeast) protein is Polyphosphatidylinositol phosphatase INP52.